Here is a 101-residue protein sequence, read N- to C-terminus: Antiviral protein CAP (101 aa).

Has antiviral activity against tobacco mosaic virus and antitumor activity. This is Antiviral protein CAP from Coprinus comatus (Shaggy mane).